Reading from the N-terminus, the 213-residue chain is Putative protein Brevis radix-like 3 (213 aa).

The disordered stretch occupies residues 7–27 (CSSKEGGEDGSRGAATPHGRD). The BRX domain occupies 158-213 (REWTAQVEPGVQITFVTLPGGGNDLKRIRFSRERFGEDRAKVWWEHNRDRIQAQYL).

Belongs to the BRX family.

It localises to the nucleus. This is Putative protein Brevis radix-like 3 (BRXL3) from Oryza sativa subsp. japonica (Rice).